The chain runs to 729 residues: Fatty acid oxidation complex subunit alpha (729 aa).

The segment at 1–189 is enoyl-CoA hydratase/isomerase; it reads MLYKGDTLYL…KIGLVDGVVK (189 aa). Asp296 contacts substrate. Residues 311–729 form a 3-hydroxyacyl-CoA dehydrogenase region; the sequence is ETPKQAAVLG…ARPVGDLKTA (419 aa). NAD(+) contacts are provided by residues Met324, Asp343, 400 to 402, Lys407, and Ser429; that span reads VVE. His450 (for 3-hydroxyacyl-CoA dehydrogenase activity) is an active-site residue. Asn453 contributes to the NAD(+) binding site. The substrate site is built by Asn500 and Tyr660. Residues 708–729 are disordered; it reads RHNEPYYPPVEPARPVGDLKTA.

It in the N-terminal section; belongs to the enoyl-CoA hydratase/isomerase family. In the C-terminal section; belongs to the 3-hydroxyacyl-CoA dehydrogenase family. In terms of assembly, heterotetramer of two alpha chains (FadB) and two beta chains (FadA).

It carries out the reaction a (3S)-3-hydroxyacyl-CoA + NAD(+) = a 3-oxoacyl-CoA + NADH + H(+). It catalyses the reaction a (3S)-3-hydroxyacyl-CoA = a (2E)-enoyl-CoA + H2O. The catalysed reaction is a 4-saturated-(3S)-3-hydroxyacyl-CoA = a (3E)-enoyl-CoA + H2O. The enzyme catalyses (3S)-3-hydroxybutanoyl-CoA = (3R)-3-hydroxybutanoyl-CoA. It carries out the reaction a (3Z)-enoyl-CoA = a 4-saturated (2E)-enoyl-CoA. It catalyses the reaction a (3E)-enoyl-CoA = a 4-saturated (2E)-enoyl-CoA. The protein operates within lipid metabolism; fatty acid beta-oxidation. Its function is as follows. Involved in the aerobic and anaerobic degradation of long-chain fatty acids via beta-oxidation cycle. Catalyzes the formation of 3-oxoacyl-CoA from enoyl-CoA via L-3-hydroxyacyl-CoA. It can also use D-3-hydroxyacyl-CoA and cis-3-enoyl-CoA as substrate. This Escherichia coli (strain SMS-3-5 / SECEC) protein is Fatty acid oxidation complex subunit alpha.